The sequence spans 67 residues: uncharacterized protein (67 aa).

Residues 12–34 (YYYAHQTVCITSTGFALCFVVQA) form a helical membrane-spanning segment.

It is found in the membrane. This is an uncharacterized protein from Saccharomyces cerevisiae (strain ATCC 204508 / S288c) (Baker's yeast).